The chain runs to 423 residues: MDIDQYMTDLGRRARHASRAMARASTAAKNAALDAVARAIERDAQALKDANARDVARAREKGLDAAFIDRLTLSDNALKTMVEGLRQVASLADPIGEIGNLKYRPSGIRVGQMRVPLGVIGIIYESRPNVTIDAAALCLKSGNATILRGGSEALESNAALAKLIGEGLEAAGLPQDAVQVVATADRAAVGKLITMTDYVDVIVPRGGKSLIERLINEARVPMIKHLDGICHVYVDDRADLAKALTVCDNAKTHRYGTCNTMETLLVASGIAATLLPPLGKLYRDKQVELRVDAAARAVLAEAGVGPLVDATDEDWHTEYLAPVLAIKVVDGLDAAIEHINHYGSHHTDAIVTEDHDRAMRFLREVDSASVMVNASTRFADGFEFGLGAEIGISNDKLHARGPVGLEGLTSLKYVVLGHGEGRQ.

This sequence belongs to the gamma-glutamyl phosphate reductase family.

It is found in the cytoplasm. The catalysed reaction is L-glutamate 5-semialdehyde + phosphate + NADP(+) = L-glutamyl 5-phosphate + NADPH + H(+). The protein operates within amino-acid biosynthesis; L-proline biosynthesis; L-glutamate 5-semialdehyde from L-glutamate: step 2/2. Catalyzes the NADPH-dependent reduction of L-glutamate 5-phosphate into L-glutamate 5-semialdehyde and phosphate. The product spontaneously undergoes cyclization to form 1-pyrroline-5-carboxylate. This is Gamma-glutamyl phosphate reductase from Burkholderia ambifaria (strain MC40-6).